Consider the following 285-residue polypeptide: Bifunctional protein FolD (285 aa).

NADP(+)-binding positions include 165–167 and S190; that span reads GRS.

Belongs to the tetrahydrofolate dehydrogenase/cyclohydrolase family. As to quaternary structure, homodimer.

The catalysed reaction is (6R)-5,10-methylene-5,6,7,8-tetrahydrofolate + NADP(+) = (6R)-5,10-methenyltetrahydrofolate + NADPH. The enzyme catalyses (6R)-5,10-methenyltetrahydrofolate + H2O = (6R)-10-formyltetrahydrofolate + H(+). It participates in one-carbon metabolism; tetrahydrofolate interconversion. Catalyzes the oxidation of 5,10-methylenetetrahydrofolate to 5,10-methenyltetrahydrofolate and then the hydrolysis of 5,10-methenyltetrahydrofolate to 10-formyltetrahydrofolate. In Ligilactobacillus salivarius (strain UCC118) (Lactobacillus salivarius), this protein is Bifunctional protein FolD.